A 223-amino-acid chain; its full sequence is Phosphoribosylformylglycinamidine synthase subunit PurQ (223 aa).

Residues 2–223 (KFAVIQFPGS…ASVLKNFVGK (222 aa)) form the Glutamine amidotransferase type-1 domain. The Nucleophile role is filled by C86. Catalysis depends on residues H195 and E197.

In terms of assembly, part of the FGAM synthase complex composed of 1 PurL, 1 PurQ and 2 PurS subunits.

It localises to the cytoplasm. It catalyses the reaction N(2)-formyl-N(1)-(5-phospho-beta-D-ribosyl)glycinamide + L-glutamine + ATP + H2O = 2-formamido-N(1)-(5-O-phospho-beta-D-ribosyl)acetamidine + L-glutamate + ADP + phosphate + H(+). The enzyme catalyses L-glutamine + H2O = L-glutamate + NH4(+). The protein operates within purine metabolism; IMP biosynthesis via de novo pathway; 5-amino-1-(5-phospho-D-ribosyl)imidazole from N(2)-formyl-N(1)-(5-phospho-D-ribosyl)glycinamide: step 1/2. Functionally, part of the phosphoribosylformylglycinamidine synthase complex involved in the purines biosynthetic pathway. Catalyzes the ATP-dependent conversion of formylglycinamide ribonucleotide (FGAR) and glutamine to yield formylglycinamidine ribonucleotide (FGAM) and glutamate. The FGAM synthase complex is composed of three subunits. PurQ produces an ammonia molecule by converting glutamine to glutamate. PurL transfers the ammonia molecule to FGAR to form FGAM in an ATP-dependent manner. PurS interacts with PurQ and PurL and is thought to assist in the transfer of the ammonia molecule from PurQ to PurL. This is Phosphoribosylformylglycinamidine synthase subunit PurQ from Lactococcus lactis subsp. lactis (strain IL1403) (Streptococcus lactis).